The chain runs to 75 residues: Dermaseptin-A3 (75 aa).

The N-terminal stretch at 1-22 (MAFLKKSLFLVLLLGLISLSIC) is a signal peptide. The propeptide occupies 23-43 (EEEKRENEVEEEQEDDEQSEL). A Glutamine amide modification is found at Gln72. A propeptide spanning residues 74 to 75 (EQ) is cleaved from the precursor.

The protein belongs to the frog skin active peptide (FSAP) family. Dermaseptin subfamily. As to expression, expressed by the skin glands.

Its subcellular location is the secreted. Possesses a potent antimicrobial activity against Gram-positive and Gram-negative bacteria. Probably acts by disturbing membrane functions with its amphipathic structure. The chain is Dermaseptin-A3 from Agalychnis annae (Blue-sided leaf frog).